Reading from the N-terminus, the 359-residue chain is Type-1 angiotensin II receptor (359 aa).

Over 1–25 the chain is Extracellular; it reads MALNSSADDGIKRIQDDCPKAGRHS. N-linked (GlcNAc...) asparagine glycosylation is present at Asn4. Residues Gln15 and Asp17 each contribute to the angiotensin II site. Intrachain disulfides connect Cys18–Cys274 and Cys101–Cys180. Residues 26–55 form a helical membrane-spanning segment; it reads YIFVMIPTLYSIIFVVGIFGNSLVVIVIYF. The Cytoplasmic segment spans residues 56 to 61; sequence YMKLKT. Residues 62-89 traverse the membrane as a helical segment; sequence VASVFLLNLALADLCFLLTLPVWAVYTA. The Extracellular segment spans residues 90–98; sequence MEYRWPFGN. Residues 99–125 form a helical membrane-spanning segment; that stretch reads HLCKIASAGISFNLYASVFLLTCLSID. The Cytoplasmic portion of the chain corresponds to 126-141; it reads RYLAIVHPMKSRLRRT. Residues 142–165 traverse the membrane as a helical segment; the sequence is MLVAKVTCVVIWLLAGLASLPAVI. Residues 166-190 lie on the Extracellular side of the membrane; sequence HRNVYFIENTNSTVCAFHYESQNST. Position 167 (Arg167) interacts with angiotensin II. N-linked (GlcNAc...) asparagine glycosylation occurs at Asn176. Angiotensin II contacts are provided by Phe182, His183, and Tyr184. Residue Asn188 is glycosylated (N-linked (GlcNAc...) asparagine). The helical transmembrane segment at 191-216 threads the bilayer; that stretch reads LPVGLGLTKNILGFMFPFLIILTSYT. Lys199 contacts angiotensin II. The Cytoplasmic portion of the chain corresponds to 217-239; that stretch reads LIWKALKKAYEIQKNKPRNDDIF. A helical membrane pass occupies residues 240–268; it reads RIIMAIVLFFFFSWIPHQIFTFLDVLIQL. At 269–278 the chain is on the extracellular side; that stretch reads GVIRDCKIAD. Residues 279–304 traverse the membrane as a helical segment; sequence VVDTAMPITICIAYFNNCLNPLFYGF. Residues 305–359 are Cytoplasmic-facing; the sequence is LGKKFKKYFLQLLKYIPPKAKSHSSLSTKMSTLSYRPSDNMNSSAKKPASCFEVE. Residue Cys355 is the site of S-palmitoyl cysteine attachment.

This sequence belongs to the G-protein coupled receptor 1 family. In terms of assembly, interacts with MAS1. Interacts with ARRB1. Interacts with FLNA (via filamin repeat 21); increases PKA-mediated phosphorylation of FLNA. C-terminal Ser or Thr residues may be phosphorylated.

The protein resides in the cell membrane. In terms of biological role, receptor for angiotensin II, a vasoconstricting peptide, which acts as a key regulator of blood pressure and sodium retention by the kidney. The activated receptor in turn couples to G-alpha proteins G(q) (GNAQ, GNA11, GNA14 or GNA15) and thus activates phospholipase C and increases the cytosolic Ca(2+) concentrations, which in turn triggers cellular responses such as stimulation of protein kinase C. This Meriones unguiculatus (Mongolian jird) protein is Type-1 angiotensin II receptor (AGTR1).